Reading from the N-terminus, the 1450-residue chain is DNA-directed RNA polymerase RPB1 homolog (1450 aa).

This sequence belongs to the RNA polymerase beta' chain family. Part of the viral DNA-directed RNA polymerase that consists of 8 polII-like subunits (RPB1, RPB2, RPB3, RPB5, RPB6, RPB7, RPB9, RPB10), a capping enzyme and a termination factor.

It is found in the virion. The catalysed reaction is RNA(n) + a ribonucleoside 5'-triphosphate = RNA(n+1) + diphosphate. Its function is as follows. Catalytic component of the DNA-directed RNA polymerase (RNAP) that catalyzes the transcription in the cytoplasm of viral DNA into RNA using the four ribonucleoside triphosphates as substrates. Forms the polymerase active center together with RPB2. Part of the core element with the central large cleft, the clamp element that moves to open and close the cleft and the jaws that are thought to grab the incoming DNA template. This chain is DNA-directed RNA polymerase RPB1 homolog, found in Ornithodoros (relapsing fever ticks).